The following is a 224-amino-acid chain: Enolase-phosphatase E1 (224 aa).

It belongs to the HAD-like hydrolase superfamily. MasA/MtnC family. Monomer. It depends on Mg(2+) as a cofactor.

It carries out the reaction 5-methylsulfanyl-2,3-dioxopentyl phosphate + H2O = 1,2-dihydroxy-5-(methylsulfanyl)pent-1-en-3-one + phosphate. The protein operates within amino-acid biosynthesis; L-methionine biosynthesis via salvage pathway; L-methionine from S-methyl-5-thio-alpha-D-ribose 1-phosphate: step 3/6. It functions in the pathway amino-acid biosynthesis; L-methionine biosynthesis via salvage pathway; L-methionine from S-methyl-5-thio-alpha-D-ribose 1-phosphate: step 4/6. In terms of biological role, bifunctional enzyme that catalyzes the enolization of 2,3-diketo-5-methylthiopentyl-1-phosphate (DK-MTP-1-P) into the intermediate 2-hydroxy-3-keto-5-methylthiopentenyl-1-phosphate (HK-MTPenyl-1-P), which is then dephosphorylated to form the acireductone 1,2-dihydroxy-3-keto-5-methylthiopentene (DHK-MTPene). This is Enolase-phosphatase E1 from Thioalkalivibrio sulfidiphilus (strain HL-EbGR7).